The sequence spans 200 residues: Large ribosomal subunit protein uL4 (200 aa).

Residues 42 to 65 form a disordered region; the sequence is TRAQKTRSEVSGGGAKPWRQKGTG.

Belongs to the universal ribosomal protein uL4 family. As to quaternary structure, part of the 50S ribosomal subunit.

Its function is as follows. One of the primary rRNA binding proteins, this protein initially binds near the 5'-end of the 23S rRNA. It is important during the early stages of 50S assembly. It makes multiple contacts with different domains of the 23S rRNA in the assembled 50S subunit and ribosome. Functionally, forms part of the polypeptide exit tunnel. This Vibrio parahaemolyticus serotype O3:K6 (strain RIMD 2210633) protein is Large ribosomal subunit protein uL4.